Reading from the N-terminus, the 373-residue chain is Anhydro-N-acetylmuramic acid kinase (373 aa).

Residue 13–20 participates in ATP binding; sequence GTSMDGID.

Belongs to the anhydro-N-acetylmuramic acid kinase family.

It catalyses the reaction 1,6-anhydro-N-acetyl-beta-muramate + ATP + H2O = N-acetyl-D-muramate 6-phosphate + ADP + H(+). It functions in the pathway amino-sugar metabolism; 1,6-anhydro-N-acetylmuramate degradation. The protein operates within cell wall biogenesis; peptidoglycan recycling. Catalyzes the specific phosphorylation of 1,6-anhydro-N-acetylmuramic acid (anhMurNAc) with the simultaneous cleavage of the 1,6-anhydro ring, generating MurNAc-6-P. Is required for the utilization of anhMurNAc either imported from the medium or derived from its own cell wall murein, and thus plays a role in cell wall recycling. The sequence is that of Anhydro-N-acetylmuramic acid kinase from Agrobacterium fabrum (strain C58 / ATCC 33970) (Agrobacterium tumefaciens (strain C58)).